We begin with the raw amino-acid sequence, 173 residues long: Bifunctional protein PyrR (173 aa).

Residues 40–41 (TR), 97–105 (DDVLYTGRT), and arginine 130 contribute to the substrate site. Residues 93 to 105 (VILIDDVLYTGRT) carry the PRPP-binding motif.

Belongs to the purine/pyrimidine phosphoribosyltransferase family. PyrR subfamily. Homodimer and homohexamer; in equilibrium.

The enzyme catalyses UMP + diphosphate = 5-phospho-alpha-D-ribose 1-diphosphate + uracil. Functionally, regulates transcriptional attenuation of the pyrimidine nucleotide (pyr) operon by binding in a uridine-dependent manner to specific sites on pyr mRNA. This disrupts an antiterminator hairpin in the RNA and favors formation of a downstream transcription terminator, leading to a reduced expression of downstream genes. Its function is as follows. Also displays a weak uracil phosphoribosyltransferase activity which is not physiologically significant. This Streptococcus pyogenes serotype M6 (strain ATCC BAA-946 / MGAS10394) protein is Bifunctional protein PyrR.